We begin with the raw amino-acid sequence, 145 residues long: Transcriptional regulator MraZ (145 aa).

SpoVT-AbrB domains lie at 7-54 (NATN…GPDL) and 83-126 (GVFM…QPQA).

Belongs to the MraZ family. As to quaternary structure, forms oligomers.

It localises to the cytoplasm. The protein localises to the nucleoid. The polypeptide is Transcriptional regulator MraZ (Rhizobium johnstonii (strain DSM 114642 / LMG 32736 / 3841) (Rhizobium leguminosarum bv. viciae)).